We begin with the raw amino-acid sequence, 164 residues long: MYCPFCSAQDTKVIDSRLVADGVQIRRRRECLSCTERFTTFETAELVMPRLVKTDGTRQPFDEAKLRAGMLRALEKRPVSMEDLEAAISRICHRLRATGERELPARELGEFVMEELQQLDDVAYVRFASVYRSFQDISEFSAEVDRLKKAGGKPGDKLGEPKES.

Residues 3 to 34 (CPFCSAQDTKVIDSRLVADGVQIRRRRECLSC) fold into a zinc finger. One can recognise an ATP-cone domain in the interval 49–139 (PRLVKTDGTR…VYRSFQDISE (91 aa)).

This sequence belongs to the NrdR family. The cofactor is Zn(2+).

Its function is as follows. Negatively regulates transcription of bacterial ribonucleotide reductase nrd genes and operons by binding to NrdR-boxes. This Alcanivorax borkumensis (strain ATCC 700651 / DSM 11573 / NCIMB 13689 / SK2) protein is Transcriptional repressor NrdR.